Here is a 54-residue protein sequence, read N- to C-terminus: Ribulose bisphosphate carboxylase large chain (54 aa).

Residues 1-2 (MS) constitute a propeptide that is removed on maturation. Residue Pro-3 is modified to N-acetylproline. Position 14 is an N6,N6,N6-trimethyllysine (Lys-14).

Belongs to the RuBisCO large chain family. Type I subfamily. In terms of assembly, heterohexadecamer of 8 large chains and 8 small chains.

Its subcellular location is the plastid. The protein resides in the chloroplast. It carries out the reaction 2 (2R)-3-phosphoglycerate + 2 H(+) = D-ribulose 1,5-bisphosphate + CO2 + H2O. It catalyses the reaction D-ribulose 1,5-bisphosphate + O2 = 2-phosphoglycolate + (2R)-3-phosphoglycerate + 2 H(+). In terms of biological role, ruBisCO catalyzes two reactions: the carboxylation of D-ribulose 1,5-bisphosphate, the primary event in carbon dioxide fixation, as well as the oxidative fragmentation of the pentose substrate in the photorespiration process. Both reactions occur simultaneously and in competition at the same active site. The chain is Ribulose bisphosphate carboxylase large chain (rbcL) from Icacina mannii.